We begin with the raw amino-acid sequence, 504 residues long: Amyloid-beta A4 precursor protein-binding family B member 3 (504 aa).

In terms of domain architecture, WW spans Thr29 to Trp61. 2 PID domains span residues Glu111–Leu278 and Ser283–Ser438.

As to quaternary structure, interacts with APP (via intracellular domain). Interacts with APLP1 and APLP2 (via intracellular domain). As to expression, expressed predominantly in brain and testis.

It localises to the cytoplasm. The protein resides in the nucleus. May modulate the internalization of amyloid-beta precursor protein. In Rattus norvegicus (Rat), this protein is Amyloid-beta A4 precursor protein-binding family B member 3.